The following is a 591-amino-acid chain: Developmental and secondary metabolism regulator VEA1 (591 aa).

The segment at 1–22 is disordered; the sequence is MATKASSILHPPNETEHTMSRI. Over residues 13-22 the composition is skewed to basic and acidic residues; that stretch reads NETEHTMSRI. In terms of domain architecture, Velvet spans 26–235; that stretch reads GKKLTYNLKV…AEQGCRVRIR (210 aa). The short motif at 40–45 is the Nuclear localization signal element; the sequence is ERARAC. Positions 238-547 are disordered; sequence VRMRRREPKP…TSGGSDDEIM (310 aa). The segment covering 245 to 260 has biased composition (basic and acidic residues); sequence PKPNKDYGAYDDRRIT. The segment covering 306 to 321 has biased composition (polar residues); sequence HQQPSPNLAATPQSHL. The segment covering 330 to 347 has biased composition (pro residues); it reads YHAPPPPPTAHPAPPPAY. Over residues 386 to 395 the composition is skewed to polar residues; that stretch reads YDQSKSSLPM. Residues 422 to 433 are compositionally biased toward low complexity; the sequence is PSQLHPTQQYQQ. Residues 434–448 show a composition bias toward pro residues; sequence PTPPPPPPAAIAPHP. Residues 452–493 form a PEST region; it reads RTPTKPSPSTFFPPTPSRLSVEVDSSNEADDAILNAIRTRRG. Positions 494–516 are enriched in basic and acidic residues; the sequence is YILDEKSGATKRSRDSSDHDLKP.

The protein belongs to the velvet family. VeA subfamily. Component of the heterotrimeric velvet complex composed of LAE1, VEA1 and VEL2; VEA1 acting as a bridging protein between LAE1 and VEL2.

It is found in the nucleus. Its subcellular location is the cytoplasm. Functionally, component of the velvet transcription factor complex that controls sexual/asexual developmental ratio in response to light, promoting sexual development in the darkness while stimulating asexual sporulation under illumination. The velvet complex hat acts as a global regulator for secondary metabolite gene expression. Regulates cleistothecial formation and hyphal growth. Acts as a positive regulator of virulence. The sequence is that of Developmental and secondary metabolism regulator VEA1 from Ajellomyces capsulatus (Darling's disease fungus).